We begin with the raw amino-acid sequence, 654 residues long: NADPH-dependent diflavin oxidoreductase 1 (654 aa).

In terms of domain architecture, Flavodoxin-like spans 14–166 (ALVLYGSETG…TFIPWITDFR (153 aa)). FMN-binding positions include 20 to 25 (SETGNA), 75 to 78 (STTG), and 113 to 122 (LGDSSYPKFN). An FAD-binding FR-type domain is found at 235–485 (PDALTATLVE…QLQRGGLSSS (251 aa)). FAD contacts are provided by residues Arg-389, 419–422 (RQFS), and 458–461 (GVCT). NADP(+)-binding positions include Thr-500, 568–569 (SR), and 574–578 (KIYVQ). Trp-654 contacts FAD.

The protein belongs to the NADPH-dependent diflavin oxidoreductase NDOR1 family. It in the N-terminal section; belongs to the flavodoxin family. In the C-terminal section; belongs to the flavoprotein pyridine nucleotide cytochrome reductase family. Interacts with dre2; as part of the cytosolic iron-sulfur (Fe-S) protein assembly (CIA) machinery. FAD serves as cofactor. It depends on FMN as a cofactor.

It localises to the cytoplasm. The protein resides in the mitochondrion. It catalyses the reaction 2 oxidized [2Fe-2S]-[protein] + NADPH = 2 reduced [2Fe-2S]-[protein] + NADP(+) + H(+). NADPH-dependent reductase which is a central component of the cytosolic iron-sulfur (Fe-S) protein assembly (CIA) machinery. Transfers electrons from NADPH via its FAD and FMN prosthetic groups to the [2Fe-2S] cluster of dre2, another key component of the CIA machinery. In turn, this reduced cluster provides electrons for assembly of cytosolic iron-sulfur cluster proteins. Positively controls H(2)O(2)-induced cell death. This chain is NADPH-dependent diflavin oxidoreductase 1, found in Aspergillus fumigatus (strain ATCC MYA-4609 / CBS 101355 / FGSC A1100 / Af293) (Neosartorya fumigata).